We begin with the raw amino-acid sequence, 675 residues long: Protein PALS1 (675 aa).

2 disordered regions span residues 1-34 (MTTSHMNGHVTEESDSEVKNVDLASPEEHQKHRE) and 51-78 (RRSAQLERIRQQQEDMRRRREEEGKKQE). The required for the correct localization of PALS1 and PATJ at cell-cell contacts and the normal formation of tight junctions and adherens junctions stretch occupies residues 1–345 (MTTSHMNGHV…QQIKPPPAKE (345 aa)). 2 stretches are compositionally biased toward basic and acidic residues: residues 10–34 (VTEESDSEVKNVDLASPEEHQKHRE) and 54–78 (AQLERIRQQQEDMRRRREEEGKKQE). Phosphoserine occurs at positions 14 and 25. Residues 21–140 (VDLASPEEHQ…LKHIQHTLVD (120 aa)) are interaction with PARD6B. Phosphoserine is present on residues Ser83 and Ser84. 2 consecutive L27 domains span residues 120 to 177 (KILE…NKAS) and 179 to 235 (PFPL…MQLE). Positions 181–243 (PLISNAQDLA…LEPITDERVY (63 aa)) are interaction with LIN7C. The PDZ domain maps to 256–336 (IVRIEKARDI…TLTFVLIPSQ (81 aa)). Positions 345 to 417 (ETVIHVKAHF…PGKSFQQQRE (73 aa)) constitute an SH3 domain. The region spanning 479-660 (KRPIILIGPQ…AYQELLRLIN (182 aa)) is the Guanylate kinase-like domain. Position 486 to 493 (486 to 493 (GPQNCGQN)) interacts with ATP.

The protein belongs to the MAGUK family. As to quaternary structure, heterodimer with MPP1. Forms a heterotrimeric complex composed of PALS1, LIN7B and PATJ; the N-terminal L27 domain of PALS1 interacts with the L27 domain of PATJ and the C-terminal L27 domain of PALS1 interacts with the L27 domain of LIN7B. Component of a complex composed of PALS1, CRB1 and MPP4. Component of a complex whose core is composed of ARHGAP17, AMOT, PALS1, PATJ and PARD3/PAR3. Component of a complex composed of PALS1, CRB1 and EPB41L5. Within the complex, interacts (via HOOK domain) with EPB41L5 (via FERM domain), and interacts with CRB1 (via intracellular domain). Component of a complex composed of PALS1, MPP3 and CRB1; PALS1 acts as a bridging protein between MPP3 (via guanylate kinase-like domain) and CRB1. Component of a complex composed of CRB3, PALS1 and PATJ. As part of the Crumbs complex; interacts with WWP1, the interaction is enhanced by AMOTL2 and facilitates WWP1 localization to the plasma membrane. The Crumbs complex promotes monoubiquitination of AMOTL2 by WWP1, which activates the Hippo signaling pathway. Interacts (via PDZ domain) with PATJ (via N-terminus). Interacts with EZR. Interacts (via PDZ domain) with CRB1 (via C-terminal ERLI motif). While the PDZ domain is sufficient for interaction with CRB1, the adjacent SH3 and guanylate kinase-like domains are likely to contribute to a high affinity interaction. Interacts with WWTR1/TAZ (via WW domain). Interacts with MPP7. Interacts (via PDZ domain) with CRB3 (via C-terminus). Interacts with LIN7C. Interacts with MPDZ. Interacts with PARD6B. Interacts with SC6A1. Interacts with CDH5; the interaction promotes PALS1 localization to cell junctions and is required for CDH5-mediated vascular lumen formation and endothelial cell. Interacts with NPHP1 (via coiled coil and SH3 domains). Interacts with NPHP4. Interacts with CRB2. In terms of assembly, (Microbial infection) Interacts (via PDZ domain) with human coronaviruses SARS-CoV and, probably, SARS-CoV-2 envelope small membrane protein E (via C-terminus); this inhibits the interaction between PALS1 and CRB3. In terms of tissue distribution, expressed at the outer limiting membrane in the retina (at protein level). Expressed in T lymphocytes (at protein level). Expressed in the kidney (at protein level).

The protein localises to the golgi apparatus. It localises to the cell membrane. Its subcellular location is the endomembrane system. The protein resides in the cell junction. It is found in the tight junction. The protein localises to the adherens junction. It localises to the cell projection. Its subcellular location is the axon. The protein resides in the perikaryon. It is found in the apical cell membrane. The protein localises to the endoplasmic reticulum-Golgi intermediate compartment. Plays a role in tight junction biogenesis and in the establishment of cell polarity in epithelial cells. Also involved in adherens junction biogenesis by ensuring correct localization of the exocyst complex protein EXOC4/SEC8 which allows trafficking of adherens junction structural component CDH1 to the cell surface. Plays a role through its interaction with CDH5 in vascular lumen formation and endothelial membrane polarity. Required during embryonic and postnatal retinal development. Required for the maintenance of cerebellar progenitor cells in an undifferentiated proliferative state, preventing premature differentiation, and is required for cerebellar histogenesis, fissure formation, cerebellar layer organization and cortical development. Plays a role in neuronal progenitor cell survival, potentially via promotion of mTOR signaling. Plays a role in the radial and longitudinal extension of the myelin sheath in Schwann cells. May modulate SC6A1/GAT1-mediated GABA uptake by stabilizing the transporter. Plays a role in the T-cell receptor-mediated activation of NF-kappa-B. Required for localization of EZR to the apical membrane of parietal cells and may play a role in the dynamic remodeling of the apical cytoskeleton. Required for the normal polarized localization of the vesicular marker STX4. Required for the correct trafficking of the myelin proteins PMP22 and MAG. Involved in promoting phosphorylation and cytoplasmic retention of transcriptional coactivators YAP1 and WWTR1/TAZ which leads to suppression of TGFB1-dependent transcription of target genes such as CCN2/CTGF, SERPINE1/PAI1, SNAI1/SNAIL1 and SMAD7. In terms of biological role, (Microbial infection) Acts as an interaction partner for human coronaviruses SARS-CoV and, probably, SARS-CoV-2 envelope protein E which results in delayed formation of tight junctions and disregulation of cell polarity. This is Protein PALS1 from Homo sapiens (Human).